A 95-amino-acid polypeptide reads, in one-letter code: Integration host factor subunit beta (95 aa).

A disordered region spans residues 56–76 (RAPRTGRNPKTGTSVELDGKY).

It belongs to the bacterial histone-like protein family. As to quaternary structure, heterodimer of an alpha and a beta chain.

Its function is as follows. This protein is one of the two subunits of integration host factor, a specific DNA-binding protein that functions in genetic recombination as well as in transcriptional and translational control. This Shewanella denitrificans (strain OS217 / ATCC BAA-1090 / DSM 15013) protein is Integration host factor subunit beta.